The sequence spans 434 residues: Glutamyl-tRNA reductase (434 aa).

Residues 49–52 (TCNR), serine 109, 114–116 (EPQ), and glutamine 120 each bind substrate. The active-site Nucleophile is cysteine 50. 189–194 (GAGEMC) serves as a coordination point for NADP(+).

It belongs to the glutamyl-tRNA reductase family. In terms of assembly, homodimer.

It carries out the reaction (S)-4-amino-5-oxopentanoate + tRNA(Glu) + NADP(+) = L-glutamyl-tRNA(Glu) + NADPH + H(+). The protein operates within porphyrin-containing compound metabolism; protoporphyrin-IX biosynthesis; 5-aminolevulinate from L-glutamyl-tRNA(Glu): step 1/2. Functionally, catalyzes the NADPH-dependent reduction of glutamyl-tRNA(Glu) to glutamate 1-semialdehyde (GSA). The polypeptide is Glutamyl-tRNA reductase (Geotalea daltonii (strain DSM 22248 / JCM 15807 / FRC-32) (Geobacter daltonii)).